A 185-amino-acid polypeptide reads, in one-letter code: Ribosome hibernation promotion factor (185 aa).

The probably still associates with ribosome stretch occupies residues 1 to 125 (MIKFNIRGEN…PLDTTDEVAE (125 aa)). The segment at 126–185 (DHVDIVRTKHVALKPMDAEEAVLQMDMLGHDFYVFTDADSNGTHVVYRRTDGRYGLIETE) is required but not sufficient to restore ribosome dimerization, in vitro will replace E.coli RMF in ribosome dimerization.

The protein belongs to the HPF/YfiA ribosome-associated protein family. Long HPF subfamily. Interacts with 100S ribosomes in stationary phase; alters the relative position of the 30S and 50S subunits.

The protein localises to the cytoplasm. Its function is as follows. Required for dimerization of active 70S ribosomes into 100S ribosomes in stationary phase; 100S ribosomes are translationally inactive and sometimes present during exponential growth. Able to dimerize E.coli 70S ribosomes in vitro. The sequence is that of Ribosome hibernation promotion factor from Lactococcus lactis subsp. cremoris (strain MG1363).